Here is a 361-residue protein sequence, read N- to C-terminus: Peptide chain release factor 1 (361 aa).

Glutamine 237 is subject to N5-methylglutamine. Over residues 287–297 the composition is skewed to basic and acidic residues; it reads KQQKEQSDTRK. The segment at 287-313 is disordered; sequence KQQKEQSDTRKSLVGSGDRSERIRTYN.

Belongs to the prokaryotic/mitochondrial release factor family. Methylated by PrmC. Methylation increases the termination efficiency of RF1.

Its subcellular location is the cytoplasm. Its function is as follows. Peptide chain release factor 1 directs the termination of translation in response to the peptide chain termination codons UAG and UAA. The polypeptide is Peptide chain release factor 1 (Francisella tularensis subsp. novicida (strain U112)).